The chain runs to 501 residues: Ribose import ATP-binding protein RbsA (501 aa).

ABC transporter domains are found at residues 5-241 (LQLK…VGRK) and 252-495 (APGD…VGKL). An ATP-binding site is contributed by 37–44 (GENGAGKS).

Belongs to the ABC transporter superfamily. Ribose importer (TC 3.A.1.2.1) family. As to quaternary structure, the complex is composed of an ATP-binding protein (RbsA), two transmembrane proteins (RbsC) and a solute-binding protein (RbsB).

The protein resides in the cell inner membrane. It carries out the reaction D-ribose(out) + ATP + H2O = D-ribose(in) + ADP + phosphate + H(+). In terms of biological role, part of the ABC transporter complex RbsABC involved in ribose import. Responsible for energy coupling to the transport system. This chain is Ribose import ATP-binding protein RbsA, found in Escherichia coli O6:H1 (strain CFT073 / ATCC 700928 / UPEC).